Reading from the N-terminus, the 324-residue chain is MNTETSTQSAPSDTYDTSIYYNSSPRVTANDITTLTSFAAPAPQVLDYANTQYDIYRNQPAYYLPSYAPTAPTTFYSDFANFNVTRSQDFASVPAVANSSDVKPIIIKQEKSTPNATELIIQSRVDSQHEDTTTSTAGGAGVGGPRRTKFVLSVDRRKAATMRERRRLRKVNEAFEVVKQRTCPNPNQRLPKVEILRSAIDYINNLERMLQQAGKMTKIMEQNQHLQMTQQINGAPPHDYVTSSHFASSSYNPENMFDDDDLTDSDDDRDHHKLGNAVDLRRRNSLDRLSRIVASIPNEEAMTDEQLLQPANDVIDGEKKLEML.

A disordered region spans residues 125–146 (VDSQHEDTTTSTAGGAGVGGPR). One can recognise a bHLH domain in the interval 155-206 (DRRKAATMRERRRLRKVNEAFEVVKQRTCPNPNQRLPKVEILRSAIDYINNL). Residues 251 to 272 (YNPENMFDDDDLTDSDDDRDHH) form a disordered region. Residues 256–267 (MFDDDDLTDSDD) are compositionally biased toward acidic residues.

Efficient DNA binding requires dimerization with another bHLH protein. As to expression, body wall muscle cells; in clonal muscle precursors, in a set of early embryonic blastomeres (the ms-granddaughters), and in six glial-like cells called GLRS.

It is found in the nucleus. Functionally, involved in myogenesis, in cooperation with transcription factors unc-120 and hnd-1. Acts redundantly with fozi-1 to promote body wall muscle cell and coelomocyte specification in postembryonic mesoderm progenitors, probably through suppression of sem-2. In Caenorhabditis elegans, this protein is Myoblast determination protein 1 homolog.